The following is a 172-amino-acid chain: Chorion protein S18 (172 aa).

Residues 1–17 form the signal peptide; sequence MMKFMCICLCAISAVSA.

The protein belongs to the chorion protein S15/S18 family.

It is found in the secreted. Functionally, chorion membrane (egg shell) protein; plays a role in protecting the egg from the environment. The protein is Chorion protein S18 (Cp18) of Drosophila melanogaster (Fruit fly).